The following is a 168-amino-acid chain: MNDNLVCLGIITSPHGIKGAVKVKTFTEKPENISLYGKLISGDENYKIDSVSVIGDNLVIATISGVNSRNEAELLRNKKLYIERSKLPELNDEDEFYQSDLVDMEVRLKSNELYGYVKSVYNFGSGDILEILVISTKKRIMLSFTKEIFPHINIKGRYIVLNIPEFID.

The PRC barrel domain maps to 93-168 (EDEFYQSDLV…IVLNIPEFID (76 aa)).

Belongs to the RimM family. In terms of assembly, binds ribosomal protein uS19.

The protein resides in the cytoplasm. Its function is as follows. An accessory protein needed during the final step in the assembly of 30S ribosomal subunit, possibly for assembly of the head region. Essential for efficient processing of 16S rRNA. May be needed both before and after RbfA during the maturation of 16S rRNA. It has affinity for free ribosomal 30S subunits but not for 70S ribosomes. The sequence is that of Ribosome maturation factor RimM from Wolbachia pipientis wMel.